The chain runs to 355 residues: Putative arylamide transporter (355 aa).

The next 6 membrane-spanning stretches (helical) occupy residues 22 to 42, 44 to 64, 71 to 91, 92 to 112, 119 to 139, and 150 to 170; these read TVLW…YLTH, VFNH…MSAT, RAQQ…GVHA, LLGS…SVAV, VAQG…VLVF, and LFDA…LFPP.

Its subcellular location is the cell membrane. Functionally, may be involved in the import of arylamide compounds. The sequence is that of Putative arylamide transporter from Mycobacterium bovis (strain ATCC BAA-935 / AF2122/97).